Reading from the N-terminus, the 385-residue chain is Glucans biosynthesis protein C (385 aa).

A run of 10 helical transmembrane segments spans residues 17–37 (AWLM…SHTW), 60–80 (MQVF…RYPL), 91–111 (VGIP…IMLQ), 137–157 (ISHL…VWIF), 173–193 (KFSM…YAVI), 212–232 (FIVM…LAFI), 239–259 (LFTT…VAYL), 274–294 (TESV…FSFG), 311–331 (ASLF…AYIT), and 338–358 (WLGF…LYEI).

Belongs to the acyltransferase 3 family. OpgC subfamily.

The protein localises to the cell membrane. It participates in glycan metabolism; osmoregulated periplasmic glucan (OPG) biosynthesis. Functionally, necessary for the succinyl substitution of periplasmic glucans. Could catalyze the transfer of succinyl residues from the cytoplasmic side of the membrane to the nascent glucan backbones on the periplasmic side of the membrane. In Escherichia coli O45:K1 (strain S88 / ExPEC), this protein is Glucans biosynthesis protein C.